We begin with the raw amino-acid sequence, 76 residues long: Neuromacin-like protein (76 aa).

4 disulfide bridges follow: C18–C25, C40–C44, C54–C61, and C72–C74.

This sequence belongs to the macin family.

Its subcellular location is the secreted. The protein is Neuromacin-like protein of Aplysia californica (California sea hare).